Reading from the N-terminus, the 279-residue chain is Pleckstrin homology domain-containing family F member 1 (279 aa).

Residues 35-131 (VLLGEGVLTK…WISHIEECVR (97 aa)) form the PH domain. The segment at 152–212 (DKATDICMRC…VCSLCYRELA (61 aa)) adopts an FYVE-type zinc-finger fold. Residues Cys158, Cys161, Cys175, Cys178, Cys183, Cys186, Cys204, and Cys207 each contribute to the Zn(2+) site. Positions 219–264 (EAKERFRGSPGQLTHLGSTMCGASSGDDDDSDEDREGSGDGDWPTQ) are disordered. Residues 244–253 (GDDDDSDEDR) show a composition bias toward acidic residues.

The protein localises to the nucleus. Its subcellular location is the cytoplasm. It localises to the perinuclear region. The protein resides in the lysosome. May induce apoptosis through the lysosomal-mitochondrial pathway. Translocates to the lysosome initiating the permeabilization of lysosomal membrane (LMP) and resulting in the release of CTSD and CTSL to the cytoplasm. Triggers the caspase-independent apoptosis by altering mitochondrial membrane permeabilization (MMP) resulting in the release of PDCD8. The polypeptide is Pleckstrin homology domain-containing family F member 1 (Plekhf1) (Rattus norvegicus (Rat)).